Consider the following 130-residue polypeptide: Small ribosomal subunit protein uS9 (130 aa).

Belongs to the universal ribosomal protein uS9 family.

This chain is Small ribosomal subunit protein uS9, found in Geobacillus thermodenitrificans (strain NG80-2).